Here is an 88-residue protein sequence, read N- to C-terminus: METVLIALLRFYKVAVSPMLGNRCRFYPSCSDYAREAIQYHGAARGTYLAVRRVCRCHPFSAGGIDLVPPPNSDTRARGEADARSHRL.

The tract at residues 68 to 88 (VPPPNSDTRARGEADARSHRL) is disordered. A compositionally biased stretch (basic and acidic residues) spans 75–88 (TRARGEADARSHRL).

The protein belongs to the UPF0161 family.

The protein localises to the cell inner membrane. In terms of biological role, could be involved in insertion of integral membrane proteins into the membrane. This chain is Putative membrane protein insertion efficiency factor, found in Burkholderia ambifaria (strain MC40-6).